An 890-amino-acid polypeptide reads, in one-letter code: Alanine--tRNA ligase (890 aa).

Positions 573, 577, 675, and 679 each coordinate Zn(2+).

This sequence belongs to the class-II aminoacyl-tRNA synthetase family. Zn(2+) is required as a cofactor.

The protein resides in the cytoplasm. The enzyme catalyses tRNA(Ala) + L-alanine + ATP = L-alanyl-tRNA(Ala) + AMP + diphosphate. Catalyzes the attachment of alanine to tRNA(Ala) in a two-step reaction: alanine is first activated by ATP to form Ala-AMP and then transferred to the acceptor end of tRNA(Ala). Also edits incorrectly charged Ser-tRNA(Ala) and Gly-tRNA(Ala) via its editing domain. This is Alanine--tRNA ligase from Streptomyces avermitilis (strain ATCC 31267 / DSM 46492 / JCM 5070 / NBRC 14893 / NCIMB 12804 / NRRL 8165 / MA-4680).